The following is a 338-amino-acid chain: Nicotinate-nucleotide--dimethylbenzimidazole phosphoribosyltransferase (338 aa).

The active-site Proton acceptor is the Glu-305.

It belongs to the CobT family.

It carries out the reaction 5,6-dimethylbenzimidazole + nicotinate beta-D-ribonucleotide = alpha-ribazole 5'-phosphate + nicotinate + H(+). Its pathway is nucleoside biosynthesis; alpha-ribazole biosynthesis; alpha-ribazole from 5,6-dimethylbenzimidazole: step 1/2. In terms of biological role, catalyzes the synthesis of alpha-ribazole-5'-phosphate from nicotinate mononucleotide (NAMN) and 5,6-dimethylbenzimidazole (DMB). The polypeptide is Nicotinate-nucleotide--dimethylbenzimidazole phosphoribosyltransferase (Sinorhizobium medicae (strain WSM419) (Ensifer medicae)).